We begin with the raw amino-acid sequence, 410 residues long: Argininosuccinate synthase (410 aa).

10-18 (AYSGGLDTS) provides a ligand contact to ATP. Residues Tyr-88 and Ser-93 each contribute to the L-citrulline site. Gly-118 contributes to the ATP binding site. L-aspartate-binding residues include Thr-120, Asn-124, and Asp-125. Asn-124 provides a ligand contact to L-citrulline. 5 residues coordinate L-citrulline: Arg-128, Ser-177, Ser-186, Glu-262, and Tyr-274.

This sequence belongs to the argininosuccinate synthase family. Type 1 subfamily. As to quaternary structure, homotetramer.

The protein resides in the cytoplasm. The enzyme catalyses L-citrulline + L-aspartate + ATP = 2-(N(omega)-L-arginino)succinate + AMP + diphosphate + H(+). Its pathway is amino-acid biosynthesis; L-arginine biosynthesis; L-arginine from L-ornithine and carbamoyl phosphate: step 2/3. The polypeptide is Argininosuccinate synthase (Thermoanaerobacter sp. (strain X514)).